Consider the following 591-residue polypeptide: MIVLPNKVRIFINDRMKKDIYLGISNFGFENDIDEILGIAHLLEHLLISFDSTNFLANASTSRSYMSFWCKSINSATESDAIRTLVSWFFSNGKLKDNFSLSSIRFHIKELENEYYFRNEVFHCMDILTFLSGGDLYNGGRIDMIDNLNIVRDMLVNRMQRISGSNIVIFVKRLGPGTLDFFKQTFGSLPACPEIIPSSIPVSTNGKIVMTPSPFYTVMVKINPTLDNILGILYLYETYHLIDYETIGNQLYLTVSFIDETEYESFLRGEAILQISQCQRINMNYSDDYMMNIYLNFPWLSHDLYDYITRINDDSKSILISLTNEIYASIINRDIIVIYPNFSKAMCNTRDTQQHPIVVLDATNDGLIKKPYRSIPLMKRLTSNEIFIRYGDASLMDMITLSLSKQDISLKRNAEGIRVKHSFSADDIQAIMESDSFLKYSRSKPAAMYQYIFLSFFASGNSIDDILANRDSTLEFSKRTKSKILFGRNTRYDVTAKSSFVCGIVRGKSLDKTSLVEMMWDLKKKGLIYSMEFTNLLSKNTFYLFTFTIYTDEVYDYLNTNKLFSAKCLVVSTKGDVENFSSLKKDVVIRV.

His-41 provides a ligand contact to Zn(2+). Glu-44 is an active-site residue. His-45 is a Zn(2+) binding site.

The protein belongs to the peptidase M44 family. It depends on Zn(2+) as a cofactor. Post-translationally, undergoes proteolytic processing during the course of infection. May be cleaved into 46 kDa and 22 kDa products (Potential).

Its subcellular location is the virion. Its function is as follows. Probably involved in maturation of some viral proteins by processing them preferentially at Ala-Gly-|-Ser/Thr/Lys motifs. Does not seem to be responsible for the cleavage of major core proteins. In Homo sapiens (Human), this protein is Metalloendopeptidase OPG085 (OPG085).